The following is a 445-amino-acid chain: Histidinol dehydrogenase (445 aa).

NAD(+) contacts are provided by tyrosine 138, glutamine 199, and asparagine 222. Substrate is bound by residues serine 245, glutamine 267, and histidine 270. Residues glutamine 267 and histidine 270 each contribute to the Zn(2+) site. Residues glutamate 335 and histidine 336 each act as proton acceptor in the active site. Residues histidine 336, aspartate 369, glutamate 423, and histidine 428 each coordinate substrate. Residue aspartate 369 coordinates Zn(2+). Position 428 (histidine 428) interacts with Zn(2+).

This sequence belongs to the histidinol dehydrogenase family. Requires Zn(2+) as cofactor.

The catalysed reaction is L-histidinol + 2 NAD(+) + H2O = L-histidine + 2 NADH + 3 H(+). Its pathway is amino-acid biosynthesis; L-histidine biosynthesis; L-histidine from 5-phospho-alpha-D-ribose 1-diphosphate: step 9/9. Functionally, catalyzes the sequential NAD-dependent oxidations of L-histidinol to L-histidinaldehyde and then to L-histidine. This is Histidinol dehydrogenase from Burkholderia mallei (strain ATCC 23344).